A 170-amino-acid chain; its full sequence is Ribosome maturation factor RimM (170 aa).

The 74-residue stretch at 97–170 folds into the PRC barrel domain; sequence NADEYYWVDL…LVVVDWDPEF (74 aa).

The protein belongs to the RimM family. Binds ribosomal protein uS19.

The protein localises to the cytoplasm. Functionally, an accessory protein needed during the final step in the assembly of 30S ribosomal subunit, possibly for assembly of the head region. Essential for efficient processing of 16S rRNA. May be needed both before and after RbfA during the maturation of 16S rRNA. It has affinity for free ribosomal 30S subunits but not for 70S ribosomes. The protein is Ribosome maturation factor RimM of Stenotrophomonas maltophilia (strain R551-3).